The primary structure comprises 411 residues: Multifunctional CCA protein (411 aa).

ATP is bound by residues Gly8 and Arg11. The CTP site is built by Gly8 and Arg11. Residues Asp21 and Asp23 each coordinate Mg(2+). Residues Arg91, Arg143, and Arg146 each coordinate ATP. Arg91, Arg143, and Arg146 together coordinate CTP. Positions 232–333 (TGVHVMMVID…MRLLERCDAL (102 aa)) constitute an HD domain.

This sequence belongs to the tRNA nucleotidyltransferase/poly(A) polymerase family. Bacterial CCA-adding enzyme type 1 subfamily. As to quaternary structure, monomer. Can also form homodimers and oligomers. Requires Mg(2+) as cofactor. Ni(2+) serves as cofactor.

It carries out the reaction a tRNA precursor + 2 CTP + ATP = a tRNA with a 3' CCA end + 3 diphosphate. The catalysed reaction is a tRNA with a 3' CCA end + 2 CTP + ATP = a tRNA with a 3' CCACCA end + 3 diphosphate. Functionally, catalyzes the addition and repair of the essential 3'-terminal CCA sequence in tRNAs without using a nucleic acid template. Adds these three nucleotides in the order of C, C, and A to the tRNA nucleotide-73, using CTP and ATP as substrates and producing inorganic pyrophosphate. tRNA 3'-terminal CCA addition is required both for tRNA processing and repair. Also involved in tRNA surveillance by mediating tandem CCA addition to generate a CCACCA at the 3' terminus of unstable tRNAs. While stable tRNAs receive only 3'-terminal CCA, unstable tRNAs are marked with CCACCA and rapidly degraded. The polypeptide is Multifunctional CCA protein (Cupriavidus necator (strain ATCC 17699 / DSM 428 / KCTC 22496 / NCIMB 10442 / H16 / Stanier 337) (Ralstonia eutropha)).